A 447-amino-acid polypeptide reads, in one-letter code: Argininosuccinate synthase (447 aa).

ATP-binding positions include 17–25 (AFSGGLDTS) and Ala43. Tyr99 contributes to the L-citrulline binding site. Gly129 and Thr131 together coordinate ATP. Residues Thr131, Asn135, and Asp136 each contribute to the L-aspartate site. An L-citrulline-binding site is contributed by Asn135. Asp136 is a binding site for ATP. Positions 139 and 192 each coordinate L-citrulline. ATP is bound at residue Asp194. Residues Thr201, Glu203, and Glu280 each contribute to the L-citrulline site.

It belongs to the argininosuccinate synthase family. Type 2 subfamily. As to quaternary structure, homotetramer.

It localises to the cytoplasm. It catalyses the reaction L-citrulline + L-aspartate + ATP = 2-(N(omega)-L-arginino)succinate + AMP + diphosphate + H(+). Its pathway is amino-acid biosynthesis; L-arginine biosynthesis; L-arginine from L-ornithine and carbamoyl phosphate: step 2/3. The sequence is that of Argininosuccinate synthase from Salmonella agona (strain SL483).